A 111-amino-acid chain; its full sequence is Prothymosin alpha (111 aa).

Met-1 carries the post-translational modification N-acetylmethionine. The disordered stretch occupies residues Met-1–Asp-111. Residue Ser-2 is modified to N-acetylserine; in Prothymosin alpha, N-terminally processed. A Phosphoserine modification is found at Ser-2. At Thr-8 the chain carries Phosphothreonine. Ser-9 and Ser-10 each carry phosphoserine. Thr-13 and Thr-14 each carry phosphothreonine. Residues Thr-13 to Arg-31 are compositionally biased toward basic and acidic residues. Lys-15 is modified (N6-acetyllysine; alternate). N6-succinyllysine; alternate is present on Lys-15. Residues Glu-40 to Glu-84 show a composition bias toward acidic residues. Residues Asp-101 to Asp-111 show a composition bias toward basic and acidic residues. Thr-102 is modified (phosphothreonine). Residue Lys-103 is modified to N6-acetyllysine; alternate. Lys-103 is covalently cross-linked (Glycyl lysine isopeptide (Lys-Gly) (interchain with G-Cter in SUMO2); alternate). A Phosphothreonine modification is found at Thr-107.

This sequence belongs to the pro/parathymosin family. Interacts with NUPR1; regulates apoptotic process. In terms of processing, covalently linked to a small RNA of about 20 nucleotides.

It localises to the nucleus. Its function is as follows. Prothymosin alpha may mediate immune function by conferring resistance to certain opportunistic infections. This is Prothymosin alpha (PTMA) from Homo sapiens (Human).